A 153-amino-acid polypeptide reads, in one-letter code: Ribonuclease VapC6 (153 aa).

In terms of domain architecture, PINc spans 6-152 (VFIDSSVMVG…EKVDFIEIIK (147 aa)). Positions 9 and 120 each coordinate Mg(2+).

Belongs to the PINc/VapC protein family. The cofactor is Mg(2+).

In terms of biological role, toxic component of a type II toxin-antitoxin (TA) system. An RNase. This is Ribonuclease VapC6 from Methanocaldococcus jannaschii (strain ATCC 43067 / DSM 2661 / JAL-1 / JCM 10045 / NBRC 100440) (Methanococcus jannaschii).